The sequence spans 75 residues: UPF0270 protein PP_1747 (75 aa).

The protein belongs to the UPF0270 family.

In Pseudomonas putida (strain ATCC 47054 / DSM 6125 / CFBP 8728 / NCIMB 11950 / KT2440), this protein is UPF0270 protein PP_1747.